We begin with the raw amino-acid sequence, 123 residues long: Small ribosomal subunit protein uS12 (123 aa).

Asp-89 is subject to 3-methylthioaspartic acid. The tract at residues 101 to 123 (TLDTQGVKDRRQRRSKYGAKRPK) is disordered. Basic residues predominate over residues 110 to 123 (RRQRRSKYGAKRPK).

The protein belongs to the universal ribosomal protein uS12 family. In terms of assembly, part of the 30S ribosomal subunit. Contacts proteins S8 and S17. May interact with IF1 in the 30S initiation complex.

Functionally, with S4 and S5 plays an important role in translational accuracy. Its function is as follows. Interacts with and stabilizes bases of the 16S rRNA that are involved in tRNA selection in the A site and with the mRNA backbone. Located at the interface of the 30S and 50S subunits, it traverses the body of the 30S subunit contacting proteins on the other side and probably holding the rRNA structure together. The combined cluster of proteins S8, S12 and S17 appears to hold together the shoulder and platform of the 30S subunit. This is Small ribosomal subunit protein uS12 from Paramagnetospirillum magneticum (strain ATCC 700264 / AMB-1) (Magnetospirillum magneticum).